The sequence spans 166 residues: Putative universal stress protein SA1532 (166 aa).

It belongs to the universal stress protein A family.

The protein resides in the cytoplasm. The protein is Putative universal stress protein SA1532 of Staphylococcus aureus (strain N315).